Reading from the N-terminus, the 151-residue chain is Ribosomal RNA large subunit methyltransferase H (151 aa).

S-adenosyl-L-methionine-binding positions include Gly-100 and 119 to 124; that span reads LSKMTF.

This sequence belongs to the RNA methyltransferase RlmH family. In terms of assembly, homodimer.

Its subcellular location is the cytoplasm. The enzyme catalyses pseudouridine(1915) in 23S rRNA + S-adenosyl-L-methionine = N(3)-methylpseudouridine(1915) in 23S rRNA + S-adenosyl-L-homocysteine + H(+). Specifically methylates the pseudouridine at position 1915 (m3Psi1915) in 23S rRNA. This is Ribosomal RNA large subunit methyltransferase H from Thermotoga maritima (strain ATCC 43589 / DSM 3109 / JCM 10099 / NBRC 100826 / MSB8).